The chain runs to 144 residues: Ribosomally synthesized cyclic peptide phomopsin precursor phomA' (144 aa).

Residues 1–18 (MRFTPAIVIAAFCSLAVA) form the signal peptide. Propeptides lie at residues 19–35 (APAAKAIARSPSEAVED), 42–50 (KKRGEAVED), 57–65 (KKRGEAVED), 72–79 (KRGEAVED), 86–94 (KKRGEAVED), 101–108 (KRGEAVED), 115–123 (KKRGEAVED), 130–137 (KRGEAVED), and Lys144.

In terms of processing, phomA' is processed by several endopeptidases including kexin proteases as well as the cluster-specific S41 family peptidase phomP1' and the peptidase phomG' to produce 5 identical copies of the hexapeptide Tyr-Val-Ile-Pro-Ile-Asp and 3 identical copies of Tyr-Val-Ile-Pro-Phe-Asp, that are further modified into phomapsins A and P, respectively. The timing and order of proteolysis of the phomA' precursor and PTMs are still unknown. Two tyrosinase-like enzyme phomQ1' and PhomQ2, catalyze the chlorination and hydroxylation of Tyr, respectively. PhomYb', is proposed to be involved in the construction of the macrocyclic structure. The other four ustYa family proteins may be involved in PTMs that generate the unique structure of phomopsin A. PhomYa' is required for the hydroxylation of C-beta of Tyr. PhomYc', PhomYd', and PhomYe' are responsible for the biosynthesis of 2,3-dehydroisoleucine (dIle), 2,3-dehydroaspartic acid (dAsp), and 3,4-dehydroproline (dPro), respectively. While dIle formation by phomYc is indispensable for the installation of dAsp by phomYd, the order of the other PTMs have not been elucidated yet. Most of the biosynthetic enzymes likely have broad substrate specificity, and thus, there might be a metabolic grid from a precursor to phomopsin A. The enzyme(s) responsible for the biosynthesis of 3,4-dehydrovaline (dVal) have also not been identified yet. Finally, PhomM' acts as an S-adenosylmethionine-dependent alpha-N-methyltransferase that catalyzes two successive N-methylation reactions, converting N-desmethyl-phomopsin A to phomopsin A and phomopsin A further to an N,N-dimethylated congener called phomopsin E.

The protein operates within mycotoxin biosynthesis. In terms of biological role, ribosomally synthesized cyclic peptide phomopsin precursor; part of the gene cluster that mediates the biosynthesis of the phomopsins, a group of hexapeptide mycotoxins which infects lupins and causes lupinosis disease in livestock. The phomA' translated product contains a 5-fold repeated peptide embedding the hexapeptide Tyr-Val-Ile-Pro-Ile-Asp and a 3-fold repeated peptide embedding the hexapeptide Tyr-Val-Ile-Pro-Phe-Asp, that is converted into phomapsin A and phomapsin P, respectively. After being excised from the precursor peptide by kexin proteases, the core peptides are cyclized and modified post-translationally by enzymes encoded within the corresponding gene cluster. The protein is Ribosomally synthesized cyclic peptide phomopsin precursor phomA' of Diaporthe leptostromiformis (Lupinosis disease fungus).